The following is a 314-amino-acid chain: Ribosomal protein L11 methyltransferase (314 aa).

The S-adenosyl-L-methionine site is built by Thr-164, Gly-185, Asp-207, and Asn-249.

Belongs to the methyltransferase superfamily. PrmA family.

It localises to the cytoplasm. It catalyses the reaction L-lysyl-[protein] + 3 S-adenosyl-L-methionine = N(6),N(6),N(6)-trimethyl-L-lysyl-[protein] + 3 S-adenosyl-L-homocysteine + 3 H(+). Functionally, methylates ribosomal protein L11. The sequence is that of Ribosomal protein L11 methyltransferase from Clostridium beijerinckii (strain ATCC 51743 / NCIMB 8052) (Clostridium acetobutylicum).